The primary structure comprises 368 residues: MQPTRQTPSATAAISGGGGASAGAIETDALVIGAGPVGLFQVFQLGLQDLRCHVVDVLSQPGGQCAELYPAKPIYDIPALPVCSGTELVERLLQQVAPFDPVLHLGQEVESLAPRADGRFDIGTSAGTQFIARAVFIAAGVGAFSPRRLKLPGLDTLAASCVSHQAPDVSACQGQTVLVHGGDDRALDWACRLAEHGVAVSLLYRRDVYPAAPEQVRRLELLASQGRVTRRVGQPTQARADAAGQLTGVDHLDPSGQTHHEPATRLFVSLGLSPRLGPLSSWGLQMERKLLDVEPSRFETSLPGVYAVGDINSYPGKLKLIVCGFHEATLAAWAAAHRLRPDAPHHLEYTTSSARLQRLLGVLPRGAE.

Asp56, Gln64, Tyr69, Val109, Phe144, Asp310, and Thr351 together coordinate FAD.

This sequence belongs to the ferredoxin--NADP reductase type 2 family. In terms of assembly, homodimer. It depends on FAD as a cofactor.

The catalysed reaction is 2 reduced [2Fe-2S]-[ferredoxin] + NADP(+) + H(+) = 2 oxidized [2Fe-2S]-[ferredoxin] + NADPH. The protein is Ferredoxin--NADP reductase of Leptothrix cholodnii (strain ATCC 51168 / LMG 8142 / SP-6) (Leptothrix discophora (strain SP-6)).